The sequence spans 722 residues: uncharacterized protein (722 aa).

Active-site charge relay system residues include Ser-575, Asp-658, and His-691.

The protein belongs to the peptidase S9B family.

This is an uncharacterized protein from Rickettsia prowazekii (strain Madrid E).